The chain runs to 8384 residues: Mucin-19 (8384 aa).

The first 21 residues, 1–21 (MKLILWYLVVALWCFFKDVEA), serve as a signal peptide directing secretion. 4 disordered regions span residues 33-197 (AASR…YGAG), 222-247 (SKAD…PDAG), 279-305 (GDTG…IDLG), and 332-467 (QEGF…PEAT). Composition is skewed to low complexity over residues 35-48 (SRSG…SSSG) and 88-98 (GGFFNSSSSSG). Basic and acidic residues predominate over residues 169–184 (DKSRERWDAGNSRSED). Over residues 187 to 197 (ADSTNTRYGAG) the composition is skewed to polar residues. The span at 279–299 (GDTGISSKTVEGNQTSSSGGS) shows a compositional bias: polar residues. The span at 359–369 (GSDSSSSGDSS) shows a compositional bias: low complexity. Polar residues predominate over residues 370–381 (ARNGFENSSGIS). Low complexity-rich tracts occupy residues 424 to 435 (SDSGGNTWSSDS) and 443 to 452 (TSSSEYSTSG). 3 VWFD domains span residues 478–649 (GEIS…QHCN), 815–995 (GRCK…SSCI), and 1274–1447 (TICH…QECS). Cystine bridges form between cysteine 502–cysteine 648, cysteine 817–cysteine 952, cysteine 838–cysteine 994, cysteine 857–cysteine 865, cysteine 1276–cysteine 1411, cysteine 1298–cysteine 1446, cysteine 1307–cysteine 1408, and cysteine 1323–cysteine 1330. 27 disordered regions span residues 1680–1699 (TSSS…PFTT), 1732–2464 (AGTT…KSPG), 2484–2526 (LESE…TEGS), 2540–2827 (RPLD…MTGT), 2850–2917 (STVG…LGTI), 2984–3027 (VTTG…SGTT), 3075–3368 (GTTG…GKTG), 3386–3428 (TTRL…GKTG), 3585–3628 (ETTG…TNGL), 3667–3736 (GSSA…TGLP), 4105–4147 (TGSS…NGLS), 4187–4251 (SAGV…AEVT), 4315–4390 (GLSA…SARV), 4414–4455 (TGSS…TNGQ), 4510–4583 (TGTT…TGLP), 4790–4843 (TGTT…TGLP), 4895–4930 (SSAG…AGVT), 5130–5161 (TGTT…GVTG), 5429–5452 (VTGT…VTGK), 5464–5494 (GPSA…GTTG), 5880–5918 (GTSI…SAEM), 6069–6403 (TGKT…STES), 6440–6918 (GRAT…ETTK), 6953–7223 (GTSE…TGFK), 7250–7749 (SFST…SKTG), 7783–7975 (KNGS…EAGS), and 8020–8133 (SGRS…VSQP). Composition is skewed to low complexity over residues 1732-1746 (AGTT…TGAA), 1772-1813 (PGEA…TTGP), and 1820-1833 (GATS…EGMS). Polar residues predominate over residues 1835–1860 (VTGQSLGSTAGSDSEITAKTSFTGSS). Low complexity predominate over residues 1868–1879 (PSPGSPGHFSGG). A compositionally biased stretch (polar residues) spans 1880-1905 (TTEWGNVATTGAAGENTSGALGSTEG). The segment covering 1909 to 1921 (ATTSAGSGNTAGT) has biased composition (low complexity). The segment covering 1950–1968 (GSSTPGEADIGNTSFGKSG) has biased composition (polar residues). 2 stretches are compositionally biased toward low complexity: residues 1969 to 1983 (TPTV…SPVS) and 2013 to 2049 (GGKI…SGPS). Residues 2055 to 2100 (NYGQSSEIPGTIKSSSDVSGTMGQSDTTSGPSVAVTRTSEQSSGVT) are compositionally biased toward polar residues. Low complexity-rich tracts occupy residues 2132-2147 (TTGS…GPSS) and 2159-2170 (GSGTSGQSVTGS). Composition is skewed to polar residues over residues 2171-2186 (RATG…TVSF) and 2209-2225 (GSGT…TTRL). Low complexity-rich tracts occupy residues 2233-2246 (TESS…TTPS) and 2280-2313 (SGPS…TKPS). The tract at residues 2238 to 6086 (GVTGTTTPSA…GVTGTTGLSA (3849 aa)) is approximate repeats of G-V-T-G-T-T-G-P-S-A. Composition is skewed to polar residues over residues 2316-2332 (RTGT…TTEP) and 2354-2372 (ATES…TTIP). Gly residues predominate over residues 2403 to 2419 (SSGGSGATRSSGGGMGT). The segment covering 2420–2441 (TGQSTARSETTGPLFGLTGTFG) has biased composition (low complexity). The segment covering 2442-2460 (QSATVTGTSSNSAGVTTPE) has biased composition (polar residues). Low complexity-rich tracts occupy residues 2512–2526 (SAGE…TEGS), 2545–2571 (GSGT…TTRK), and 2578–2589 (TTGLSGLTGTSG). 2 stretches are compositionally biased toward polar residues: residues 2595 to 2610 (TGTS…TSEK) and 2638 to 2653 (TRPS…QSAR). Over residues 2654–2681 (VTETVGASAGVTGTTGPSTEGSGATGPS) the composition is skewed to low complexity. 2 stretches are compositionally biased toward polar residues: residues 2695 to 2748 (SGTT…TGTT) and 2755 to 2770 (TETT…TTGP). The span at 2787–2799 (ATRSSGGETETTG) shows a compositional bias: low complexity. Polar residues-rich tracts occupy residues 2800–2827 (QSAV…MTGT), 2850–2859 (STVGLETTRP), and 2874–2892 (AQTT…QSAR). Residues 2894 to 2910 (TGASGPSVGVTGTTGPA) are compositionally biased toward low complexity. Positions 2984 to 2998 (VTTGPSVTGVETTAK) are enriched in polar residues. Positions 2999–3027 (TTSGGLSTTISSVGGTGTTGQSPERSGTT) are enriched in low complexity. The segment covering 3099-3109 (PSITGSGTTRP) has biased composition (polar residues). The segment covering 3114–3130 (SWTAGTSSGGHSTTSPS) has biased composition (low complexity). Polar residues predominate over residues 3131–3159 (VRGTETTGQSAAESVTTGPVTGYTETSGP). A compositionally biased stretch (low complexity) spans 3172–3188 (TVTQTTGSSAAVSGTTV). The segment covering 3189-3224 (QSLTVSGTTRPSSGQTEITGSSVKESGTTESSAVRS) has biased composition (polar residues). Positions 3225–3277 (GTTGPTAGVTGTNGPSSAGVTGITGSSPGVTGTTGSSPGVTGTTGSSARSGTS) are enriched in low complexity. 2 stretches are compositionally biased toward polar residues: residues 3303-3317 (ITGT…TGTT) and 3324-3362 (TGTT…SSAG). Low complexity predominate over residues 3390-3417 (SAGVTGTTGPSPGVTGTTGTPAGVTGTT). Polar residues-rich tracts occupy residues 3702–3728 (VTGT…TTGP) and 4105–4116 (TGSSARSGTSIP). Residues 4117 to 4126 (SVGETGTTRT) are compositionally biased toward low complexity. A compositionally biased stretch (polar residues) spans 4320 to 4346 (VTGTTRPSAGVTGTTGQSAEVTGTTEP). Composition is skewed to low complexity over residues 4347–4385 (SAGL…GTTG) and 4414–4426 (TGSS…STPS). 2 stretches are compositionally biased toward low complexity: residues 5469 to 5494 (VTGT…GTTG) and 5889 to 5903 (TGTT…TTTG). 3 stretches are compositionally biased toward polar residues: residues 5908-5918 (ITGTNGLSAEM), 6071-6103 (KTRS…TTKT), and 6111-6121 (TRPSAGITATT). Over residues 6156 to 6168 (TTTGTTGVTTGTT) the composition is skewed to low complexity. Polar residues-rich tracts occupy residues 6217-6248 (EVST…TATT) and 6257-6275 (APGS…SAST). The span at 6284–6295 (TGSTRGVRTTGS) shows a compositional bias: low complexity. Polar residues-rich tracts occupy residues 6303-6323 (GEFS…TTLT) and 6336-6346 (ESTTSLPQSAK). Low complexity predominate over residues 6378-6389 (SGTTISSGGSHT). 2 stretches are compositionally biased toward polar residues: residues 6440–6457 (GRAT…TSQA) and 6470–6503 (TTIT…TTYI). The span at 6507–6523 (GTTRGGLATATTGAFSG) shows a compositional bias: low complexity. Residues 6560 to 6571 (TTFTSGGSHTEA) show a composition bias toward polar residues. A compositionally biased stretch (low complexity) spans 6581-6597 (TGTESRAATTRAAPGTT). A compositionally biased stretch (polar residues) spans 6599 to 6608 (VPGSSNTGAT). The span at 6612–6628 (GGSATTRGRITTATTGA) shows a compositional bias: low complexity. Polar residues-rich tracts occupy residues 6669 to 6680 (RITSGGSYTATT) and 6689 to 6698 (APGSSNTGAT). The segment covering 6707–6718 (TRGRITTATTGA) has biased composition (low complexity). The segment covering 6752–6766 (TTLTGDRSSTGSESR) has biased composition (polar residues). Over residues 6767 to 6781 (TATTGVAPGTTVAPG) the composition is skewed to low complexity. The segment covering 6794-6817 (SGTTNIGRATGATTSIVGSDTSQA) has biased composition (polar residues). Low complexity predominate over residues 6827–6842 (SPGASSTSQSSRPGTS). The span at 6843–6875 (VTPDSSASESETVTTKEFSGTTAISRTSHTGTP) shows a compositional bias: polar residues. Residues 6887 to 6901 (TATTGVAPGTTVAPG) are compositionally biased toward low complexity. Polar residues-rich tracts occupy residues 6902–6911 (SSNTEATTSV) and 6953–6964 (GTSEVAPSTTVA). Residues 6966 to 6994 (GSFSTAATTSPGASGTTGVTTTTKTTTSL) are compositionally biased toward low complexity. Residues 7006 to 7041 (SATTGAPGSRTGTAGVPSATTVSPGSSNSEATTSVG) show a composition bias toward polar residues. Over residues 7045–7074 (KTGAETITEATTSTEGTGTSGTGFKTGTSE) the composition is skewed to low complexity. The segment covering 7085-7094 (SFSTAATTSP) has biased composition (polar residues). Over residues 7095-7112 (GASGMTGVTTTTKTTTSL) the composition is skewed to low complexity. Positions 7143 to 7158 (TRVTPGSSNSEATTSV) are enriched in polar residues. 2 stretches are compositionally biased toward low complexity: residues 7201-7215 (SGSS…TEGT) and 7250-7276 (SFST…TTSL). Over residues 7293–7311 (SGTTVAPGSSNSEATTSVG) the composition is skewed to polar residues. Residues 7379 to 7397 (TTSTKGTGTSGTGFKTGTS) show a composition bias toward low complexity. The segment covering 7403 to 7421 (TTVSPGSFSTATISPGASR) has biased composition (polar residues). The segment covering 7422 to 7435 (TTGAAPAAETTTSL) has biased composition (low complexity). A compositionally biased stretch (polar residues) spans 7465–7483 (SATTIAPGSSNSEATTSLG). Positions 7525 to 7537 (PLGGASGTSGGYV) are enriched in gly residues. 2 stretches are compositionally biased toward polar residues: residues 7544-7557 (PTTS…SRTI) and 7571-7596 (AGTS…TSPG). Positions 7600 to 7613 (MTGVRTTSKTTTSL) are enriched in low complexity. Composition is skewed to polar residues over residues 7642–7669 (SSRT…SGTG) and 7698–7708 (SFSTAATTSPG). Over residues 7715–7732 (TGPTAETTTFLGGSSTTG) the composition is skewed to low complexity. Polar residues predominate over residues 7783-7811 (KNGSMTTALGSQLSSSQTVIPGSSGTISH). The span at 7812–7828 (TTVAPGSSVTGTTTGAS) shows a compositional bias: low complexity. A compositionally biased stretch (polar residues) spans 7830 to 7851 (DQVTGSKTGTTGVALSTTVAPG). Low complexity predominate over residues 7852–7861 (SSSTEATTST). Positions 7862-7891 (GVHRTTVVGQKTGATTRGSAKQGTRSTIEA) are enriched in polar residues. The segment covering 7892-7917 (TTSFRGTGTTGSGMNTGTTGVVSGNT) has biased composition (low complexity). Over residues 7918–7934 (ISPSSFNTEATSGTSER) the composition is skewed to polar residues. The segment covering 7938-7952 (GSEIGTTGIVSGTTV) has biased composition (low complexity). 4 stretches are compositionally biased toward polar residues: residues 7953–7965 (APGS…TTSL), 8020–8040 (SGRS…SGTT), 8048–8081 (TGNT…SISG), and 8110–8120 (ETGVQTGSTLV). The 67-residue stretch at 8159–8225 (PVCHGPLGEE…DTCCEIGYCE (67 aa)) folds into the VWFC domain. Cystine bridges form between cysteine 8288–cysteine 8339, cysteine 8306–cysteine 8353, cysteine 8315–cysteine 8369, and cysteine 8319–cysteine 8371. The region spanning 8288–8376 (CKNNCRSSLV…TTCSCLDICQ (89 aa)) is the CTCK domain.

Expressed corneal epithelial cells, conjunctival goblet and epithelial cells and lacrimal gland cells (at protein level). Expressed by mucous cells of the submandibular gland and submucosal gland of the trachea. Expressed by middle ear epithelial cells.

It is found in the secreted. Its function is as follows. May function in ocular mucus homeostasis. The polypeptide is Mucin-19 (MUC19) (Homo sapiens (Human)).